The primary structure comprises 299 residues: MGKRIFLFILTNILVITTIGIVLSVISAATGVGSYIGADGRISMVALLVFSAVVGFVGSFMSLAMSRWMAKMMMGVRVLNPEKDSLTYDEQQLVDRVHRLSRAAGLSKMPEVGIYQSSEVNAFATGPSKRRSLVAVSTGLLHEMDDAAVEGVIAHEVAHVANGDMVTMTLLQGIVNTFVVFLSRIAAWIASRFVSREELVPIVHFIAVIVFQIIFSVLGSLVVFAYSRHREFHADRGGADLAGKDKMVHALRSLEAYTSRIKDDDQTAVATLKISGKRKASLFSTHPDLNERIRRLEAK.

The next 2 membrane-spanning stretches (helical) occupy residues 5 to 25 and 44 to 64; these read IFLF…VLSV and MVAL…MSLA. Residue His155 coordinates Zn(2+). Glu156 is a catalytic residue. Residue His159 coordinates Zn(2+). Helical transmembrane passes span 170–190 and 205–225; these read LLQG…AWIA and FIAV…VVFA. Position 231 (Glu231) interacts with Zn(2+).

The protein belongs to the peptidase M48B family. Zn(2+) is required as a cofactor.

It localises to the cell membrane. The sequence is that of Protease HtpX homolog from Bacillus pumilus (strain SAFR-032).